The chain runs to 87 residues: Apolipoprotein C-I (87 aa).

The first 26 residues, 1–26 (MRFILSLPVLAVVLAMVLEGPAPAQA), serve as a signal peptide directing secretion.

Belongs to the apolipoprotein C1 family.

The protein localises to the secreted. Its function is as follows. Inhibitor of lipoprotein binding to the low density lipoprotein (LDL) receptor, LDL receptor-related protein, and very low density lipoprotein (VLDL) receptor. Associates with high density lipoproteins (HDL) and the triacylglycerol-rich lipoproteins in the plasma and makes up about 10% of the protein of the VLDL and 2% of that of HDL. Appears to interfere directly with fatty acid uptake and is also the major plasma inhibitor of cholesteryl ester transfer protein (CETP). Binds free fatty acids and reduces their intracellular esterification. Modulates the interaction of APOE with beta-migrating VLDL and inhibits binding of beta-VLDL to the LDL receptor-related protein. The chain is Apolipoprotein C-I (APOC1) from Pteropus alecto (Black flying fox).